Reading from the N-terminus, the 150-residue chain is Putative pre-16S rRNA nuclease (150 aa).

This sequence belongs to the YqgF nuclease family.

The protein resides in the cytoplasm. Could be a nuclease involved in processing of the 5'-end of pre-16S rRNA. This chain is Putative pre-16S rRNA nuclease, found in Chlamydia felis (strain Fe/C-56) (Chlamydophila felis).